A 130-amino-acid polypeptide reads, in one-letter code: L-ectoine synthase (130 aa).

Belongs to the ectoine synthase family.

It carries out the reaction (2S)-4-acetamido-2-aminobutanoate = L-ectoine + H2O. It participates in amine and polyamine biosynthesis; ectoine biosynthesis; L-ectoine from L-aspartate 4-semialdehyde: step 3/3. Catalyzes the circularization of gamma-N-acetyl-alpha,gamma-diaminobutyric acid (ADABA) to ectoine (1,4,5,6-tetrahydro-2-methyl-4-pyrimidine carboxylic acid), which is an excellent osmoprotectant. The polypeptide is L-ectoine synthase (Mycolicibacterium vanbaalenii (strain DSM 7251 / JCM 13017 / BCRC 16820 / KCTC 9966 / NRRL B-24157 / PYR-1) (Mycobacterium vanbaalenii)).